The chain runs to 417 residues: Aminoacyltransferase FemB (417 aa).

The protein belongs to the FemABX family.

It localises to the cytoplasm. It carries out the reaction MurNAc-L-Ala-D-isoglutaminyl-L-Lys-(N(6)-tri-Gly)-D-Ala-D-Ala-diphospho-di-trans,octa-cis-undecaprenyl-GlcNAc + 2 glycyl-tRNA(Gly) = MurNAc-L-Ala-D-isoglutaminyl-L-Lys-(N(6)-penta-Gly)-D-Ala-D-Ala-diphospho-di-trans,octa-cis-undecaprenyl-GlcNAc + 2 tRNA(Gly) + 2 H(+). Its function is as follows. Catalyzes the incorporation of amino acid(s) into the interchain peptide bridge of peptidoglycan, using aminoacyl-tRNA as amino acid donor. The sequence is that of Aminoacyltransferase FemB (femB) from Staphylococcus epidermidis (strain ATCC 12228 / FDA PCI 1200).